The following is a 310-amino-acid chain: Porphobilinogen deaminase (310 aa).

At C242 the chain carries S-(dipyrrolylmethanemethyl)cysteine.

It belongs to the HMBS family. As to quaternary structure, monomer. Dipyrromethane is required as a cofactor.

The enzyme catalyses 4 porphobilinogen + H2O = hydroxymethylbilane + 4 NH4(+). It functions in the pathway porphyrin-containing compound metabolism; protoporphyrin-IX biosynthesis; coproporphyrinogen-III from 5-aminolevulinate: step 2/4. Tetrapolymerization of the monopyrrole PBG into the hydroxymethylbilane pre-uroporphyrinogen in several discrete steps. The polypeptide is Porphobilinogen deaminase (Psychromonas ingrahamii (strain DSM 17664 / CCUG 51855 / 37)).